The sequence spans 122 residues: Large ribosomal subunit protein uL14c (122 aa).

Belongs to the universal ribosomal protein uL14 family. In terms of assembly, part of the 50S ribosomal subunit.

The protein resides in the plastid. It is found in the chloroplast. Binds to 23S rRNA. This chain is Large ribosomal subunit protein uL14c, found in Carica papaya (Papaya).